A 606-amino-acid chain; its full sequence is MATKDPTAVERANLLNMAKLSIKGLIESALSFGRTLDSDYPPLQQFFVVMEHCLKHGLKVRKSFLSYNKTIWGPLELVEKLYPEAEEIGASVRDLPGLKTPLGRARAWLRLALMQKKMADYLRCLIIQRDLLSEFYEYHALMMEEEGAVIVGLLVGLNVIDANLCVKGEDLDSQVGVIDFSMYLKNEEDIGNKERNVQIAAILDQKNYVEELNRQLNSTVSSLHSRVDSLEKSNTKLIEELAIAKNNIIKLQEENHQLRNENKLILMKTQQHIEVTKVDVETELQTYKHSRQGLDEMYNEARRQLRDESQLRQDVENELAVQVSMKHEIELAMKLLEKDIHEKQDTLIGLRQQLEEVKAINIEMYQKLQGSEDGLKEKNEIIARLEEKTNKITAAMRQLEQRLQQAEKAQMEAEDEDEKYLQECLSKSDSLQKQISQKEKQLVQLETDLKIEKEWRQTLQEDLQKEKDALSHLRNETQQIISLKKEFLNLQDENQQLKKIYHEQEQALQELGNKLSESKLKIEDIKEANKALQGLVWLKDKEATHCKLCEKEFSLSKRKHHCRNCGEIFCNACSDNELPLPSSPKPVRVCDSCHALLIQRCSSNLP.

In terms of domain architecture, RUN spans 37 to 169 (DSDYPPLQQF…IDANLCVKGE (133 aa)). Positions 210–534 (EELNRQLNST…IKEANKALQG (325 aa)) form a coiled coil. The FYVE-type zinc finger occupies 540–598 (DKEATHCKLCEKEFSLSKRKHHCRNCGEIFCNACSDNELPLPSSPKPVRVCDSCHALLI). Cysteine 546, cysteine 549, cysteine 562, cysteine 565, cysteine 570, cysteine 573, cysteine 590, and cysteine 593 together coordinate Zn(2+).

In terms of assembly, interacts with BMX.

It localises to the nucleus. This is RUN and FYVE domain-containing protein 2 (RUFY2) from Pongo abelii (Sumatran orangutan).